We begin with the raw amino-acid sequence, 167 residues long: Protein archease (167 aa).

N-acetylalanine is present on Ala-2. Ca(2+) contacts are provided by Asp-39, Asp-166, and Ile-167.

It belongs to the archease family. Component of the tRNA-splicing ligase complex.

Its function is as follows. Component of the tRNA-splicing ligase complex required to facilitate the enzymatic turnover of catalytic subunit RTCB. Together with DDX1, acts by facilitating the guanylylation of RTCB, a key intermediate step in tRNA ligation. This chain is Protein archease (ZBTB8OS), found in Bos taurus (Bovine).